A 364-amino-acid chain; its full sequence is Probable endopolygalacturonase B (364 aa).

The N-terminal stretch at 1 to 20 (MHFFQSSLVAATMGAALVAA) is a signal peptide. Residues 21–29 (APAADLETR) constitute a propeptide that is removed on maturation. A disulfide bridge links Cys32 with Cys47. N-linked (GlcNAc...) asparagine glycosylation is found at Asn138 and Asn141. PbH1 repeat units follow at residues 159-188 (SDHL…DVGS), 189-210 (STYI…AVNS), 211-231 (GEHI…SIGS), 240-261 (VNDV…RIKT), 269-291 (VTGV…VVQQ), and 303-324 (TNGV…TSSA). Catalysis depends on Asp203, which acts as the Proton donor. A disulfide bridge links Cys205 with Cys221. Residue His225 is part of the active site. A disulfide bond links Cys331 and Cys336. Asn338 carries N-linked (GlcNAc...) asparagine glycosylation. A disulfide bond links Cys355 and Cys364.

The protein belongs to the glycosyl hydrolase 28 family.

The protein resides in the secreted. The enzyme catalyses (1,4-alpha-D-galacturonosyl)n+m + H2O = (1,4-alpha-D-galacturonosyl)n + (1,4-alpha-D-galacturonosyl)m.. Functionally, involved in maceration and soft-rotting of plant tissue. Hydrolyzes the 1,4-alpha glycosidic bonds of de-esterified pectate in the smooth region of the plant cell wall. This chain is Probable endopolygalacturonase B (pgaB), found in Aspergillus fumigatus (strain CBS 144.89 / FGSC A1163 / CEA10) (Neosartorya fumigata).